A 457-amino-acid chain; its full sequence is Tubulin beta chain (457 aa).

Residues glutamine 11, glutamate 69, serine 138, glycine 142, threonine 143, glycine 144, asparagine 204, and asparagine 226 each coordinate GTP. Glutamate 69 contributes to the Mg(2+) binding site. Residues 431-457 (EGEEEEDAYAEGAVVNGDQSYEDQYAA) form a disordered region.

This sequence belongs to the tubulin family. Dimer of alpha and beta chains. A typical microtubule is a hollow water-filled tube with an outer diameter of 25 nm and an inner diameter of 15 nM. Alpha-beta heterodimers associate head-to-tail to form protofilaments running lengthwise along the microtubule wall with the beta-tubulin subunit facing the microtubule plus end conferring a structural polarity. Microtubules usually have 13 protofilaments but different protofilament numbers can be found in some organisms and specialized cells. Mg(2+) is required as a cofactor.

The protein resides in the cytoplasm. It is found in the cytoskeleton. In terms of biological role, tubulin is the major constituent of microtubules, a cylinder consisting of laterally associated linear protofilaments composed of alpha- and beta-tubulin heterodimers. Microtubules grow by the addition of GTP-tubulin dimers to the microtubule end, where a stabilizing cap forms. Below the cap, tubulin dimers are in GDP-bound state, owing to GTPase activity of alpha-tubulin. This is Tubulin beta chain (TUBB1) from Porphyra purpurea (Red seaweed).